We begin with the raw amino-acid sequence, 64 residues long: Large ribosomal subunit protein bL35 (64 aa).

Residues 20–42 (GRVKREKMYGSHNLEKKNRKRTR) are disordered. Residues 25-35 (EKMYGSHNLEK) show a composition bias toward basic and acidic residues.

Belongs to the bacterial ribosomal protein bL35 family.

The polypeptide is Large ribosomal subunit protein bL35 (Chlorobium phaeobacteroides (strain BS1)).